Consider the following 740-residue polypeptide: Ion-translocating oxidoreductase complex subunit C (740 aa).

4Fe-4S ferredoxin-type domains follow at residues 369-397 (GEPQ…QQLY) and 407-436 (KATT…VQYF). [4Fe-4S] cluster is bound by residues C377, C380, C383, C387, C416, C419, C422, and C426. Disordered regions lie at residues 602–652 (KLEQ…DPRK), 664–685 (ARKL…PRKA), and 695–714 (KARK…QVDP). The segment covering 605–615 (QQQANAEPEQQ) has biased composition (low complexity).

It belongs to the 4Fe4S bacterial-type ferredoxin family. RnfC subfamily. As to quaternary structure, the complex is composed of six subunits: RsxA, RsxB, RsxC, RsxD, RsxE and RsxG. It depends on [4Fe-4S] cluster as a cofactor.

It is found in the cell inner membrane. In terms of biological role, part of a membrane-bound complex that couples electron transfer with translocation of ions across the membrane. Required to maintain the reduced state of SoxR. The sequence is that of Ion-translocating oxidoreductase complex subunit C from Escherichia coli O157:H7.